The sequence spans 391 residues: uncharacterized protein (391 aa).

Helical transmembrane passes span 15-35, 48-68, 81-101, 139-159, 167-187, 217-237, 251-271, 275-295, 303-323, 346-366, and 369-389; these read LSFC…LPIL, FLIG…QIPF, IIFG…TNSI, IIGV…PIIA, IFWI…FLIP, FYLG…IIPY, IVYF…VFYF, FFLK…LLLF, ICLT…EIFF, TSQF…CTFF, and NHIF…SFFC.

This sequence belongs to the major facilitator superfamily.

Its subcellular location is the cell membrane. This is an uncharacterized protein from Buchnera aphidicola subsp. Schizaphis graminum (strain Sg).